The chain runs to 352 residues: Vacuolar protein sorting-associated protein 37C (352 aa).

Ser29 carries the phosphoserine modification. One can recognise a VPS37 C-terminal domain in the interval 78–167 (VERCQEQKAK…RRPRALPELA (90 aa)). The segment at 162–352 (ALPELAGDVP…HPPGPAWPRY (191 aa)) is disordered. 3 stretches are compositionally biased toward pro residues: residues 173 to 185 (KRPPPPRPVPQAT), 202 to 213 (YPLPYSPSPGLP), and 319 to 336 (PGQPQPPVPPQPPYPPGT).

This sequence belongs to the VPS37 family. Component of the ESCRT-I complex (endosomal sorting complex required for transport I) which consists of TSG101, VPS28, a VPS37 protein (VPS37A to -D) and MVB12A or MVB12B in a 1:1:1:1 stoichiometry. Interacts with TSG101, VPS28, MVB12A and MVB12B. Component of the ESCRT-I complex (endosomal sorting complex required for transport I) which consists of TSG101, VPS28, a VPS37 protein (VPS37A to -D) and UBAP1 in a 1:1:1:1 stoichiometry. Interacts with HGS and STAM2. Interacts with CEP55. Phosphorylated by TBK1.

The protein localises to the late endosome membrane. Component of the ESCRT-I complex, a regulator of vesicular trafficking process. Required for the sorting of endocytic ubiquitinated cargos into multivesicular bodies. May be involved in cell growth and differentiation. This is Vacuolar protein sorting-associated protein 37C (Vps37c) from Mus musculus (Mouse).